The sequence spans 249 residues: Octanoyltransferase (249 aa).

A BPL/LPL catalytic domain is found at 53–234; the sequence is PDTDDEIWVV…RLIAHLDGAT (182 aa). Residues 93–100, 165–167, and 178–180 contribute to the substrate site; these read RGGQITYH, ALG, and GLS. Residue Cys-196 is the Acyl-thioester intermediate of the active site.

It belongs to the LipB family.

The protein localises to the cytoplasm. It carries out the reaction octanoyl-[ACP] + L-lysyl-[protein] = N(6)-octanoyl-L-lysyl-[protein] + holo-[ACP] + H(+). It participates in protein modification; protein lipoylation via endogenous pathway; protein N(6)-(lipoyl)lysine from octanoyl-[acyl-carrier-protein]: step 1/2. Its function is as follows. Catalyzes the transfer of endogenously produced octanoic acid from octanoyl-acyl-carrier-protein onto the lipoyl domains of lipoate-dependent enzymes. Lipoyl-ACP can also act as a substrate although octanoyl-ACP is likely to be the physiological substrate. The chain is Octanoyltransferase from Burkholderia mallei (strain NCTC 10247).